The chain runs to 362 residues: MSLQSIKYQRGSLEILDQLLLPVVSKYLPVRGVEDGWKVINKMQVRGAPAIAIVGCLSLAVEIYPEEFSSKKSLRQEIEGKLNYLVSARPTAVNMKISADELITLANELTKDDAITVEEMKQRFLKATEAMLEKDIADNRAIGANGAKAILEHVAEATGVATAGPVRVLTHCNTGSLATAGYGTALGVVRNLSELGKLEHVYCTETRPYNQGARLTAYELVHEKLPATLVLDSMVAALLRVKNVAAVVVGADRVAANGDTANKIGTYQIAVVAKHHGVPFYVAAPLTSIDLEIPSGDHIIIEVRPDREMTHVGEHRIAAPGINCWNPAFDVTPASLITGIITEHGVFKPEALKVEITKLLEL.

Aspartate 252 functions as the Proton donor in the catalytic mechanism.

The protein belongs to the eIF-2B alpha/beta/delta subunits family. MtnA subfamily.

Its subcellular location is the cytoplasm. It is found in the nucleus. It carries out the reaction 5-(methylsulfanyl)-alpha-D-ribose 1-phosphate = 5-(methylsulfanyl)-D-ribulose 1-phosphate. It participates in amino-acid biosynthesis; L-methionine biosynthesis via salvage pathway; L-methionine from S-methyl-5-thio-alpha-D-ribose 1-phosphate: step 1/6. In terms of biological role, catalyzes the interconversion of methylthioribose-1-phosphate (MTR-1-P) into methylthioribulose-1-phosphate (MTRu-1-P). The chain is Methylthioribose-1-phosphate isomerase from Drosophila mojavensis (Fruit fly).